A 67-amino-acid polypeptide reads, in one-letter code: UPF0435 protein SSP0913 (67 aa).

It belongs to the UPF0435 family.

The polypeptide is UPF0435 protein SSP0913 (Staphylococcus saprophyticus subsp. saprophyticus (strain ATCC 15305 / DSM 20229 / NCIMB 8711 / NCTC 7292 / S-41)).